A 220-amino-acid polypeptide reads, in one-letter code: Metalloproteinase inhibitor 2 (220 aa).

An N-terminal signal peptide occupies residues 1-26 (MGATARSLRLALGLLLLGTLPRGADA). A Zn(2+)-binding site is contributed by Cys27. Involved in metalloproteinase-binding stretches follow at residues 27–30 (CSCS) and 95–96 (SA). 6 disulfides stabilise this stretch: Cys27-Cys98, Cys29-Cys127, Cys39-Cys152, Cys154-Cys201, Cys159-Cys164, and Cys172-Cys193. The NTR domain maps to 27–152 (CSCSPVHPQQ…SLNHRYQMGC (126 aa)).

This sequence belongs to the protease inhibitor I35 (TIMP) family. Interacts (via the C-terminal) with MMP2 (via the C-terminal PEX domain); the interaction inhibits the MMP2 activity. The activity of TIMP2 is dependent on the presence of disulfide bonds. In terms of tissue distribution, predominantly expressed in the lung in alveolar macrophages and epithelial cells. Also found in brain, kidney, intestine, spleen and heart.

The protein localises to the secreted. Complexes with metalloproteinases (such as collagenases) and irreversibly inactivates them by binding to their catalytic zinc cofactor. The sequence is that of Metalloproteinase inhibitor 2 (TIMP2) from Cavia porcellus (Guinea pig).